Here is a 102-residue protein sequence, read N- to C-terminus: Large ribosomal subunit protein bL21 (102 aa).

This sequence belongs to the bacterial ribosomal protein bL21 family. As to quaternary structure, part of the 50S ribosomal subunit. Contacts protein L20.

Functionally, this protein binds to 23S rRNA in the presence of protein L20. This chain is Large ribosomal subunit protein bL21, found in Photorhabdus laumondii subsp. laumondii (strain DSM 15139 / CIP 105565 / TT01) (Photorhabdus luminescens subsp. laumondii).